Reading from the N-terminus, the 504-residue chain is ATP synthase subunit alpha 2 (504 aa).

169 to 176 (GDRQTGKT) contacts ATP.

It belongs to the ATPase alpha/beta chains family. In terms of assembly, F-type ATPases have 2 components, CF(1) - the catalytic core - and CF(0) - the membrane proton channel. CF(1) has five subunits: alpha(3), beta(3), gamma(1), delta(1), epsilon(1). CF(0) has three main subunits: a(1), b(2) and c(9-12). The alpha and beta chains form an alternating ring which encloses part of the gamma chain. CF(1) is attached to CF(0) by a central stalk formed by the gamma and epsilon chains, while a peripheral stalk is formed by the delta and b chains.

The protein localises to the cell membrane. It catalyses the reaction ATP + H2O + 4 H(+)(in) = ADP + phosphate + 5 H(+)(out). Its function is as follows. Produces ATP from ADP in the presence of a proton gradient across the membrane. The alpha chain is a regulatory subunit. The chain is ATP synthase subunit alpha 2 from Listeria welshimeri serovar 6b (strain ATCC 35897 / DSM 20650 / CCUG 15529 / CIP 8149 / NCTC 11857 / SLCC 5334 / V8).